The following is a 774-amino-acid chain: Probable ubiquitin-like-specific protease 2A (774 aa).

The interval 118–141 (SSLSENDEVSTGEATNPASDPHEV) is disordered. Active-site residues include His-400, Asp-430, and Cys-485. The disordered stretch occupies residues 548 to 568 (ILPANSKSEPPHCGVSNRNDQ).

It belongs to the peptidase C48 family.

Functionally, protease that catalyzes two essential functions in the SUMO pathway: processing of full-length SUMOs to their mature forms and deconjugation of SUMO from targeted proteins. The chain is Probable ubiquitin-like-specific protease 2A (ULP2A) from Arabidopsis thaliana (Mouse-ear cress).